The chain runs to 145 residues: Alpha-amylase/trypsin inhibitor CM1 (145 aa).

An N-terminal signal peptide occupies residues M1–A25.

It belongs to the protease inhibitor I6 (cereal trypsin/alpha-amylase inhibitor) family. Subunit of the tetrameric inhibitor. As to expression, endosperm.

It localises to the secreted. Its function is as follows. Alpha-amylase/trypsin inhibitor. It could be involved in insect defense mechanisms. In Triticum aestivum (Wheat), this protein is Alpha-amylase/trypsin inhibitor CM1.